Reading from the N-terminus, the 427-residue chain is MSEQESRDNAAVDAVRQKYGFGFSWLVLMIALPPLVYYLWICVTYYQGELVFTSDAAAWRRFWSHVAPPTWHAAGLYAAWFLGQAALQVWAPGPTVQGMKLPDGSRLDYRMNGIFSFLFTLAVVFGLVTMGWLDATVLYDQLGPLLTVVNIFTFVFAGFLYFWGLNGKQWERPTGRPFYDYFMGTALNPRIGSLDLKLFCEARPGMIFWLLMNLSMAAKQYELHGTVTVPMLLVVGFQSFYLIDYFIHEEAVLTTWDIKHEKFGWMLCWGDLVWLPFTYTLQAQYLVHHTHDLPVWGIIAIVALNLAGYAIFRGANIQKHHFRRDPNRIVWGKPAKYIKTKQGSLLLTSGWWGIARHMNYFGDLMIALSWCLPAAFGSPIPYFHIVYFTILLLHREKRDDAMCLAKYGEDWLQYRKKVPWRIVPKIY.

At 1–25 (MSEQESRDNAAVDAVRQKYGFGFSW) the chain is on the cytoplasmic side. A helical transmembrane segment spans residues 26 to 46 (LVLMIALPPLVYYLWICVTYY). The Periplasmic segment spans residues 47-70 (QGELVFTSDAAAWRRFWSHVAPPT). A helical membrane pass occupies residues 71–91 (WHAAGLYAAWFLGQAALQVWA). The Cytoplasmic segment spans residues 92 to 110 (PGPTVQGMKLPDGSRLDYR). The chain crosses the membrane as a helical span at residues 111–131 (MNGIFSFLFTLAVVFGLVTMG). Over 132–141 (WLDATVLYDQ) the chain is Periplasmic. Residues 142–162 (LGPLLTVVNIFTFVFAGFLYF) traverse the membrane as a helical segment. Over 163 to 197 (WGLNGKQWERPTGRPFYDYFMGTALNPRIGSLDLK) the chain is Cytoplasmic. Residues 198–218 (LFCEARPGMIFWLLMNLSMAA) form a helical membrane-spanning segment. Topologically, residues 219–226 (KQYELHGT) are periplasmic. Residues 227–247 (VTVPMLLVVGFQSFYLIDYFI) traverse the membrane as a helical segment. Residues 248 to 262 (HEEAVLTTWDIKHEK) lie on the Cytoplasmic side of the membrane. Residues 263–283 (FGWMLCWGDLVWLPFTYTLQA) traverse the membrane as a helical segment. Residues 284–291 (QYLVHHTH) are Periplasmic-facing. A helical membrane pass occupies residues 292 to 312 (DLPVWGIIAIVALNLAGYAIF). Residues 313-356 (RGANIQKHHFRRDPNRIVWGKPAKYIKTKQGSLLLTSGWWGIAR) lie on the Cytoplasmic side of the membrane. NADP(+) contacts are provided by residues Lys-319, Arg-323, Leu-347, Trp-352, and 359 to 360 (NY). The helical transmembrane segment at 357-377 (HMNYFGDLMIALSWCLPAAFG) threads the bilayer. Residue Ser-378 is a topological domain, periplasmic. Residues 379–399 (PIPYFHIVYFTILLLHREKRD) traverse the membrane as a helical segment. NADP(+) is bound by residues Asp-399, 403-407 (CLAKY), and Tyr-414. The Cytoplasmic segment spans residues 400–427 (DAMCLAKYGEDWLQYRKKVPWRIVPKIY).

The protein belongs to the ERG4/ERG24 family.

The protein resides in the cell inner membrane. It catalyses the reaction 4,4-dimethyl-5alpha-cholesta-8,24-dien-3beta-ol + NADP(+) = 4,4-dimethyl-5alpha-cholesta-8,14,24-trien-3beta-ol + NADPH + H(+). It functions in the pathway steroid biosynthesis; zymosterol biosynthesis; zymosterol from lanosterol. In terms of biological role, reduces the C14=C15 double bond of 4,4-dimethyl-cholesta-8,14,24-trienol to produce 4,4-dimethyl-cholesta-8,24-dienol. Complements the deletion of the Delta(14)-sterol reductase gene ERG24 in yeast. The sequence is that of Delta(14)-sterol reductase from Methylotuvimicrobium alcaliphilum (strain DSM 19304 / NCIMB 14124 / VKM B-2133 / 20Z) (Methylomicrobium alcaliphilum).